The following is a 210-amino-acid chain: Large ribosomal subunit protein bL25 (210 aa).

Residues Met1–Thr23 are disordered.

It belongs to the bacterial ribosomal protein bL25 family. CTC subfamily. Part of the 50S ribosomal subunit; part of the 5S rRNA/L5/L18/L25 subcomplex. Contacts the 5S rRNA. Binds to the 5S rRNA independently of L5 and L18.

Its function is as follows. This is one of the proteins that binds to the 5S RNA in the ribosome where it forms part of the central protuberance. The protein is Large ribosomal subunit protein bL25 of Rhodospirillum rubrum (strain ATCC 11170 / ATH 1.1.1 / DSM 467 / LMG 4362 / NCIMB 8255 / S1).